The following is a 285-amino-acid chain: 2,3,4,5-tetrahydropyridine-2,6-dicarboxylate N-succinyltransferase (285 aa).

Substrate-binding residues include arginine 111 and aspartate 148.

Belongs to the transferase hexapeptide repeat family. Homotrimer.

It localises to the cytoplasm. It catalyses the reaction (S)-2,3,4,5-tetrahydrodipicolinate + succinyl-CoA + H2O = (S)-2-succinylamino-6-oxoheptanedioate + CoA. It functions in the pathway amino-acid biosynthesis; L-lysine biosynthesis via DAP pathway; LL-2,6-diaminopimelate from (S)-tetrahydrodipicolinate (succinylase route): step 1/3. This chain is 2,3,4,5-tetrahydropyridine-2,6-dicarboxylate N-succinyltransferase, found in Rhizobium rhizogenes (strain K84 / ATCC BAA-868) (Agrobacterium radiobacter).